Reading from the N-terminus, the 465-residue chain is Tetratricopeptide repeat protein 38 (465 aa).

TPR repeat units lie at residues Arg-104–Asp-137, Ser-176–Asp-209, and Cys-248–Ala-281.

Belongs to the TTC38 family.

This Mus musculus (Mouse) protein is Tetratricopeptide repeat protein 38 (Ttc38).